Consider the following 763-residue polypeptide: Sphingoid long-chain bases kinase 1 (763 aa).

The tract at residues 34 to 81 (TGGSQQSSPIVFPEKRNKKVKASSRRGEVTNDPQVKPKPDEHRIDIGG) is disordered. Positions 58–81 (RRGEVTNDPQVKPKPDEHRIDIGG) are enriched in basic and acidic residues. The region spanning 245 to 384 (KSAPKMLVIL…TDVFAVEWIH (140 aa)) is the DAGKc domain. Residues 255–257 (NPR) and threonine 287 each bind ATP. 313 to 316 (GGDG) serves as a coordination point for substrate. Aspartate 315 functions as the Proton donor/acceptor in the catalytic mechanism. ATP-binding positions include glutamate 320, 345–347 (GSD), and arginine 418. Residues 561–603 (MGLTSVQDPPTRCSWGNTGGQDREDISSTVSDPGPIWDAGPKW) are disordered. 733 to 735 (DGE) is an ATP binding site.

In terms of tissue distribution, expressed in roots, stems, leaves and at higher levels in flowers.

Its function is as follows. Involved in the production of sphingolipid metabolites. Active on sphingosine, phytosphingosine (PHS, 4-hydroxysphinganine), D-erythro-dihydrosphingosine, D-erythro-sphingosine and trans-4, trans-8-sphingadienine, an LCB found exclusively in plants, but not on N-acetyl-dihydrosphingosine (C2-dihydroceramide) and D-threo-dihydrosphingosine. The protein is Sphingoid long-chain bases kinase 1 (LCBK1) of Arabidopsis thaliana (Mouse-ear cress).